Reading from the N-terminus, the 105-residue chain is MICOS complex subunit Mic10 (105 aa).

Residues 29 to 46 (LLKVTGGVAIGIVASVAF) traverse the membrane as a helical segment. The Mitochondrial intermembrane segment spans residues 47–105 (FKSRSWPIWFGSGVGLGTGWSNCRHDFASPYVLHGKRVPAGQDSQGKPAYNIITEQHKQ). The disordered stretch occupies residues 85-105 (PAGQDSQGKPAYNIITEQHKQ).

Belongs to the MICOS complex subunit Mic10 family. In terms of assembly, component of the mitochondrial contact site and cristae organizing system (MICOS) complex.

It localises to the mitochondrion inner membrane. Its function is as follows. Component of the MICOS complex, a large protein complex of the mitochondrial inner membrane that plays crucial roles in the maintenance of crista junctions, inner membrane architecture, and formation of contact sites to the outer membrane. This is MICOS complex subunit Mic10 from Caenorhabditis elegans.